A 129-amino-acid chain; its full sequence is Phosphoribosyl-AMP cyclohydrolase (129 aa).

Asp-78 is a binding site for Mg(2+). Cys-79 serves as a coordination point for Zn(2+). Residues Asp-80 and Asp-82 each coordinate Mg(2+). The Zn(2+) site is built by Cys-96 and Cys-103.

Belongs to the PRA-CH family. As to quaternary structure, homodimer. Requires Mg(2+) as cofactor. Zn(2+) serves as cofactor.

The protein localises to the cytoplasm. It catalyses the reaction 1-(5-phospho-beta-D-ribosyl)-5'-AMP + H2O = 1-(5-phospho-beta-D-ribosyl)-5-[(5-phospho-beta-D-ribosylamino)methylideneamino]imidazole-4-carboxamide. The protein operates within amino-acid biosynthesis; L-histidine biosynthesis; L-histidine from 5-phospho-alpha-D-ribose 1-diphosphate: step 3/9. In terms of biological role, catalyzes the hydrolysis of the adenine ring of phosphoribosyl-AMP. This chain is Phosphoribosyl-AMP cyclohydrolase, found in Nitrosomonas europaea (strain ATCC 19718 / CIP 103999 / KCTC 2705 / NBRC 14298).